Here is a 235-residue protein sequence, read N- to C-terminus: Ribonuclease 3 (235 aa).

The region spanning 7-134 (LKDLQNKIEI…LIASIYLDKG (128 aa)) is the RNase III domain. A Mg(2+)-binding site is contributed by glutamate 47. Aspartate 51 is an active-site residue. Residues aspartate 120 and glutamate 123 each coordinate Mg(2+). Glutamate 123 is a catalytic residue. The DRBM domain maps to 161–230 (DYKTKLQEII…AKKAIENMEV (70 aa)).

This sequence belongs to the ribonuclease III family. As to quaternary structure, homodimer. It depends on Mg(2+) as a cofactor.

Its subcellular location is the cytoplasm. The enzyme catalyses Endonucleolytic cleavage to 5'-phosphomonoester.. Its function is as follows. Digests double-stranded RNA. Involved in the processing of primary rRNA transcript to yield the immediate precursors to the large and small rRNAs (23S and 16S). Processes some mRNAs, and tRNAs when they are encoded in the rRNA operon. Processes pre-crRNA and tracrRNA of type II CRISPR loci if present in the organism. The polypeptide is Ribonuclease 3 (Clostridium tetani (strain Massachusetts / E88)).